Consider the following 212-residue polypeptide: Probable U3 small nucleolar RNA-associated protein 11 (212 aa).

The protein belongs to the UTP11 family. Component of the ribosomal small subunit (SSU) processome.

The protein localises to the nucleus. It localises to the nucleolus. Functionally, involved in nucleolar processing of pre-18S ribosomal RNA. In Plasmodium falciparum (isolate 3D7), this protein is Probable U3 small nucleolar RNA-associated protein 11.